Consider the following 349-residue polypeptide: MEFTAQQIADFLHGSVEGNPKVRLHDFAKIEEGRSGCLSFLANAKYEHYLYQTQSDAVLVNQDFEPRESVKTTLIRVPNAYAALAQLMQLVDSMKPQRKGVDSTAFVHPSVILPDDCYVGAFAYVSEGASLGTGCSLYPHVYVGSGVSVGEGTILYPHVTVYDGCSIGSRCVIHSGAVIGADGFGFAPNAEGYSKIPQLGNVIIEDDVEIGANTCIDRAVMDSTIIHRGVKLDNLVQIAHNCSVGSHTVFAAQVGMAGSSHVGEWCQFGGQVGLSGHIKVGDRVSLGGQTGLLSNVKSGSTLLGSPGMPLRDMLRASVIFPKLPDMSLRIEQLEKEISELKEICKNNKH.

His240 functions as the Proton acceptor in the catalytic mechanism.

Belongs to the transferase hexapeptide repeat family. LpxD subfamily. As to quaternary structure, homotrimer.

The enzyme catalyses a UDP-3-O-[(3R)-3-hydroxyacyl]-alpha-D-glucosamine + a (3R)-hydroxyacyl-[ACP] = a UDP-2-N,3-O-bis[(3R)-3-hydroxyacyl]-alpha-D-glucosamine + holo-[ACP] + H(+). It functions in the pathway bacterial outer membrane biogenesis; LPS lipid A biosynthesis. In terms of biological role, catalyzes the N-acylation of UDP-3-O-acylglucosamine using 3-hydroxyacyl-ACP as the acyl donor. Is involved in the biosynthesis of lipid A, a phosphorylated glycolipid that anchors the lipopolysaccharide to the outer membrane of the cell. The chain is UDP-3-O-acylglucosamine N-acyltransferase from Porphyromonas gingivalis (strain ATCC 33277 / DSM 20709 / CIP 103683 / JCM 12257 / NCTC 11834 / 2561).